Reading from the N-terminus, the 231-residue chain is Ribose-5-phosphate isomerase A (231 aa).

Substrate is bound by residues 32–35 (TGST), 85–88 (DGAD), and 98–101 (KGGG). The active-site Proton acceptor is Glu-107. Lys-125 provides a ligand contact to substrate.

The protein belongs to the ribose 5-phosphate isomerase family. Homodimer.

It carries out the reaction aldehydo-D-ribose 5-phosphate = D-ribulose 5-phosphate. It participates in carbohydrate degradation; pentose phosphate pathway; D-ribose 5-phosphate from D-ribulose 5-phosphate (non-oxidative stage): step 1/1. In terms of biological role, catalyzes the reversible conversion of ribose-5-phosphate to ribulose 5-phosphate. This is Ribose-5-phosphate isomerase A from Paraburkholderia phymatum (strain DSM 17167 / CIP 108236 / LMG 21445 / STM815) (Burkholderia phymatum).